Consider the following 1207-residue polypeptide: Chromosomal serine/threonine-protein kinase JIL-1 (1207 aa).

Positions 1 to 19 (MSRLQKQNYEILSGTSTSR) are enriched in polar residues. Disordered regions lie at residues 1 to 119 (MSRL…ASAR), 164 to 183 (QDME…SSSL), and 210 to 230 (SSST…LDLD). 2 positions are modified to phosphoserine: Ser29 and Ser31. Polar residues predominate over residues 45 to 69 (LNGQLVANGNGKTRKNSNSETMTNG). Low complexity predominate over residues 88–97 (NYNNNNNNNN). The span at 98–108 (SISATNGQYTN) shows a compositional bias: polar residues. Over residues 109 to 118 (SSSKTTSASA) the composition is skewed to low complexity. The segment covering 164–178 (QDMEEDEPNGIEIDE) has biased composition (acidic residues). The span at 213–226 (TTPSYAMPTSNSTP) shows a compositional bias: polar residues. In terms of domain architecture, Protein kinase 1 spans 261 to 530 (FKIIRVLGTG…ASEIKEHPFF (270 aa)). ATP contacts are provided by residues 267–275 (LGTGAYGRV) and Lys293. The active-site Proton acceptor is Asp389. Phosphoserine is present on Ser424. Residues 531–599 (NGINWQELRT…VAPEHLEQMR (69 aa)) enclose the AGC-kinase C-terminal domain. Thr588 carries the phosphothreonine modification. Residues 623-886 (LELGTRTSNG…LSDILDSEWL (264 aa)) form the Protein kinase 2 domain. ATP contacts are provided by residues 629–637 (TSNGAYGTC) and Lys652. Asp739 serves as the catalytic Proton acceptor. At Thr1045 the chain carries Phosphothreonine. Position 1047 is a phosphoserine (Ser1047). Positions 1168-1197 (TFPRPKAQLKRTKREPKVPRPPTRVQPERA) are disordered.

The protein belongs to the protein kinase superfamily. Ser/Thr protein kinase family. Interacts with lola. Interacts with proteins of the male specific lethal (MSL) dosage compensation complex; this interaction is mediated by the kinase domains. Mg(2+) is required as a cofactor. Post-translationally, autophosphorylated in vitro.

It localises to the nucleus. Its subcellular location is the chromosome. The enzyme catalyses L-seryl-[protein] + ATP = O-phospho-L-seryl-[protein] + ADP + H(+). It catalyses the reaction L-threonyl-[protein] + ATP = O-phospho-L-threonyl-[protein] + ADP + H(+). Phosphorylates 'Ser-10' of histone H3. May regulate gene expression by establishing or maintaining the structure of more open chromatin regions. Also required for normal polytene chromosome structure, for oogenesis and for viability throughout development. Regulates the structure of polytene chromosomes in salivary glands. May phosphorylate 'Ser-1' of histone H2A. In Drosophila melanogaster (Fruit fly), this protein is Chromosomal serine/threonine-protein kinase JIL-1.